The primary structure comprises 579 residues: YTH domain-containing family protein 2 (579 aa).

The segment at 1–45 (MSASSLLEQRPKGQGNKVQNGSVHQKDGLNDDDFEPYLSPQARPN) is disordered. Residue Ser2 is modified to N-acetylserine. A phosphoserine mark is found at Ser2, Ser4, Ser5, Ser22, Ser39, and Ser196. Positions 2–384 (SASSLLEQRP…QAGSGSTPSE (383 aa)) are localization to mRNA processing bodies (P-bodies). The tract at residues 247-387 (AKQQPKLKTK…SGSTPSEPHP (141 aa)) is disordered. Polar residues predominate over residues 291 to 316 (ALVQNIGQPTQGSPQPVGQQANNSPP). The segment covering 337 to 349 (AQLSVQQQAAQPT) has biased composition (low complexity). Ser359 bears the Phosphoserine mark. Over residues 359–371 (SGFGHNGVDGNGV) the composition is skewed to gly residues. Polar residues predominate over residues 372-383 (GQSQAGSGSTPS). Positions 385-579 (PHPVLEKLRS…VKKERQGRGK (195 aa)) are interaction with m6A-containing mRNAs. At Ser394 the chain carries Phosphoserine. The region spanning 410–544 (GRVFIIKSYS…EKAKQVLKII (135 aa)) is the YTH domain. Residues 416-418 (KSY), Asp422, 432-433 (WC), Asn462, Trp486, and Trp491 each bind RNA.

The protein belongs to the YTHDF family. YTHDF2 subfamily. As to quaternary structure, interacts with CNOT1; interaction is direct and promotes recruitment of the CCR4-NOT complex. Interacts with YTHDF3. Interacts with RIDA/HRSP12; interaction leads to recruitment of the ribonuclease P/MRP complex. In terms of processing, ubiquitinated by the SCF(SKP2) complex, leading to its degradation. Widely expressed, with highest expression in testis.

The protein resides in the cytoplasm. It is found in the cytosol. It localises to the P-body. The protein localises to the stress granule. Its subcellular location is the nucleus. Its function is as follows. Specifically recognizes and binds N6-methyladenosine (m6A)-containing RNAs, and regulates their stability. M6A is a modification present at internal sites of mRNAs and some non-coding RNAs and plays a role in mRNA stability and processing. Acts as a regulator of mRNA stability by promoting degradation of m6A-containing mRNAs via interaction with the CCR4-NOT and ribonuclease P/MRP complexes, depending on the context. The YTHDF paralogs (YTHDF1, YTHDF2 and YTHDF3) share m6A-containing mRNAs targets and act redundantly to mediate mRNA degradation and cellular differentiation. M6A-containing mRNAs containing a binding site for RIDA/HRSP12 (5'-GGUUC-3') are preferentially degraded by endoribonucleolytic cleavage: cooperative binding of RIDA/HRSP12 and YTHDF2 to transcripts leads to recruitment of the ribonuclease P/MRP complex. Other m6A-containing mRNAs undergo deadenylation via direct interaction between YTHDF2 and CNOT1, leading to recruitment of the CCR4-NOT and subsequent deadenylation of m6A-containing mRNAs. Required maternally to regulate oocyte maturation: probably acts by binding to m6A-containing mRNAs, thereby regulating maternal transcript dosage during oocyte maturation, which is essential for the competence of oocytes to sustain early zygotic development. Also required during spermatogenesis: regulates spermagonial adhesion by promoting degradation of m6A-containing transcripts coding for matrix metallopeptidases. Also involved in hematopoietic stem cells specification by binding to m6A-containing mRNAs, leading to promote their degradation. Also acts as a regulator of neural development by promoting m6A-dependent degradation of neural development-related mRNA targets. Inhibits neural specification of induced pluripotent stem cells by binding to methylated neural-specific mRNAs and promoting their degradation, thereby restraining neural differentiation. Regulates circadian regulation of hepatic lipid metabolism: acts by promoting m6A-dependent degradation of PPARA transcripts. Regulates the innate immune response to infection by inhibiting the type I interferon response: acts by binding to m6A-containing IFNB transcripts and promoting their degradation. May also act as a promoter of cap-independent mRNA translation following heat shock stress: upon stress, relocalizes to the nucleus and specifically binds mRNAs with some m6A methylation mark at their 5'-UTR, protecting demethylation of mRNAs by FTO, thereby promoting cap-independent mRNA translation. Regulates mitotic entry by promoting the phase-specific m6A-dependent degradation of WEE1 transcripts. Promotes formation of phase-separated membraneless compartments, such as P-bodies or stress granules, by undergoing liquid-liquid phase separation upon binding to mRNAs containing multiple m6A-modified residues: polymethylated mRNAs act as a multivalent scaffold for the binding of YTHDF proteins, juxtaposing their disordered regions and thereby leading to phase separation. The resulting mRNA-YTHDF complexes then partition into different endogenous phase-separated membraneless compartments, such as P-bodies, stress granules or neuronal RNA granules. May also recognize and bind RNAs modified by C5-methylcytosine (m5C) and act as a regulator of rRNA processing. The polypeptide is YTH domain-containing family protein 2 (Mus musculus (Mouse)).